Here is a 316-residue protein sequence, read N- to C-terminus: Ribosomal RNA small subunit methyltransferase H (316 aa).

Residues 42–44, D62, F86, D104, and Q111 contribute to the S-adenosyl-L-methionine site; that span reads GGH.

It belongs to the methyltransferase superfamily. RsmH family.

The protein localises to the cytoplasm. It catalyses the reaction cytidine(1402) in 16S rRNA + S-adenosyl-L-methionine = N(4)-methylcytidine(1402) in 16S rRNA + S-adenosyl-L-homocysteine + H(+). Specifically methylates the N4 position of cytidine in position 1402 (C1402) of 16S rRNA. The polypeptide is Ribosomal RNA small subunit methyltransferase H (Polynucleobacter asymbioticus (strain DSM 18221 / CIP 109841 / QLW-P1DMWA-1) (Polynucleobacter necessarius subsp. asymbioticus)).